Reading from the N-terminus, the 306-residue chain is Ribonuclease H2 subunit B (306 aa).

Residues 232–285 form a disordered region; sequence LPDLSSPTPEPPVKKRRVSDAPVEADEDYTKYNSDNKSRKSNSKMTAAQKSLAK. Basic and acidic residues predominate over residues 259–269; that stretch reads DYTKYNSDNKS.

The protein belongs to the RNase H2 subunit B family. As to quaternary structure, the RNase H2 complex is a heterotrimer composed of the catalytic subunit RNASEH2A and the non-catalytic subunits RNASEH2B and RNASEH2C.

It is found in the nucleus. In terms of biological role, non catalytic subunit of RNase H2, an endonuclease that specifically degrades the RNA of RNA:DNA hybrids. Participates in DNA replication, possibly by mediating the removal of lagging-strand Okazaki fragment RNA primers during DNA replication. Mediates the excision of single ribonucleotides from DNA:RNA duplexes. In Xenopus laevis (African clawed frog), this protein is Ribonuclease H2 subunit B (rnaseh2b).